A 320-amino-acid chain; its full sequence is MNKHVNKVALIGAGFVGSSYAFALINQGITDELVVIDVNKEKAMGDVMDLNHGKAFAPQPVKTSYGTYEDCKDADIVCICAGANQKPGETRLELVEKNLKIFKGIVSEVMASGFDGIFLVATNPVDILTYATWKFSGLPKERVIGSGTTLDSARFRFMLSEYFGAAPQNVHAHIIGEHGDTELPVWSHANVGGVPVSELVEKNDAYKQEELDQIVDDVKNAAYHIIEKKGATYYGVAMSLARITKAILHNENSILTVSTYLDGQYGADDVYIGVPAVVNRGGIAGITELNLNEKEKEQFLHSAGVLKNILKPHFAEQKVN.

NAD(+) contacts are provided by residues 15-16 (FV), Asp-37, Lys-42, Tyr-68, and 82-83 (GA). Substrate is bound by residues Gln-85, Arg-91, and 123-126 (NPVD). NAD(+)-binding positions include 121-123 (ATN) and Ser-146. Residue 151–154 (DSAR) participates in substrate binding. Beta-D-fructose 1,6-bisphosphate-binding positions include Arg-156 and 168 to 172 (QNVHA). Residue His-178 is the Proton acceptor of the active site. Tyr-223 is modified (phosphotyrosine). Thr-232 contributes to the substrate binding site.

This sequence belongs to the LDH/MDH superfamily. LDH family. Homotetramer.

It localises to the cytoplasm. The catalysed reaction is (S)-lactate + NAD(+) = pyruvate + NADH + H(+). It functions in the pathway fermentation; pyruvate fermentation to lactate; (S)-lactate from pyruvate: step 1/1. With respect to regulation, allosterically activated by fructose 1,6-bisphosphate (FBP). Its function is as follows. Catalyzes the conversion of lactate to pyruvate. In Bacillus subtilis (strain 168), this protein is L-lactate dehydrogenase.